A 169-amino-acid chain; its full sequence is Unfolded protein response-inducible protein 1 (169 aa).

In terms of biological role, involved in the unfolded protein response (UPR), a transcriptional response which up-regulates genes that enable cells to cope with misfolded, endoplasmic reticulum-retained proteins. UPR is part of the endoplasmic reticulum quality control (ERQC) which prevents the exit of misfolded secretory and membrane proteins from the endoplasmic reticulum. This is Unfolded protein response-inducible protein 1 (ULI1) from Saccharomyces cerevisiae (strain ATCC 204508 / S288c) (Baker's yeast).